The primary structure comprises 144 residues: Small ribosomal subunit protein uS19 (144 aa).

Belongs to the universal ribosomal protein uS19 family.

Its function is as follows. Protein S19 forms a complex with S13 that binds strongly to the 16S ribosomal RNA. In Hyperthermus butylicus (strain DSM 5456 / JCM 9403 / PLM1-5), this protein is Small ribosomal subunit protein uS19.